We begin with the raw amino-acid sequence, 231 residues long: Hypoxanthine-guanine-xanthine phosphoribosyltransferase (231 aa).

Residues K77, 144–152 (EDIIDTGKT), K176, and D204 each bind GMP. D148 serves as the catalytic Proton acceptor. D204 serves as a coordination point for Mg(2+).

The protein belongs to the purine/pyrimidine phosphoribosyltransferase family. In terms of assembly, homotetramer. Mg(2+) serves as cofactor.

Its subcellular location is the cytoplasm. The enzyme catalyses IMP + diphosphate = hypoxanthine + 5-phospho-alpha-D-ribose 1-diphosphate. It carries out the reaction GMP + diphosphate = guanine + 5-phospho-alpha-D-ribose 1-diphosphate. It catalyses the reaction XMP + diphosphate = xanthine + 5-phospho-alpha-D-ribose 1-diphosphate. Its pathway is purine metabolism; GMP biosynthesis via salvage pathway; GMP from guanine: step 1/1. It participates in purine metabolism; IMP biosynthesis via salvage pathway; IMP from hypoxanthine: step 1/1. It functions in the pathway purine metabolism; XMP biosynthesis via salvage pathway; XMP from xanthine: step 1/1. Catalyzes the transfer of a ribosyl phosphate group from 5-phosphoribose 1-diphosphate to the N(9) of hypoxanthine, guanine or xanthine, leading to IMP, GMP and XMP, respectively. Plays a central role in the generation of purine nucleotides through the purine salvage pathway. In Plasmodium falciparum (isolate K1 / Thailand), this protein is Hypoxanthine-guanine-xanthine phosphoribosyltransferase (LACZ).